The primary structure comprises 670 residues: MAETKIIYHMDEEETPYLVKLPVAPERVTLADFKNVLSNRPVHAYKFFFKSMDQDFGVVKEEIFDDNAKLPCFNGRVVSWLVLVEGAHSDAGSQGTDSHTDLPPPLERTGGIGDSRSPSFQPDVASSRDGMDNETGTESMVSHRRDRARRRNREEAARTNGHPRGDRRRDVGLPPDSASTALSSELESSSFVDSDEDDSTSRLSSSTEQSTSSRLIRKHKRRRRKQRLRQADRASSFSSMTDSTMSLNIITVTLNMERHHFLGICIVGQSNDRGDGGIYIGSIMKGGAVAADGRIEPGDMLLQVNDVNFENMSNDDAVRVLREIVSQTGPISLTVAKCWDPTPRSYFTVPRPDPVRPIDPAAWLSHTAALTGALPRPQLEEAPLTVESDMNTVVRVMQLPDSGLEIRDRMWLKITIANAVIGADVVDWLYTHVEGFKERREARKYASSLLKHGFLRHTVNKITFSEQCYYVFGDLCSNLATLNLNSGSSGTSDQDTLAPLPHPAAPWPLGQGYPYQYPGPPPCFPPAYQDPGFSYGSGSTGSQQSEGSKSSGSTRNTLRPPACEKERRAAGSGDSDSESDHTAPSGVGSSWRERPADQLSRGSSPRSQASSYAPGLPPPHPTTKAYTVVGGPPGGPPVRELAAVPPELTGSRQSFQKAMGNPCEFFVDIM.

In terms of domain architecture, DIX spans 1–85; sequence MAETKIIYHM…RVVSWLVLVE (85 aa). The segment at 89–240 is disordered; sequence SDAGSQGTDS…ADRASSFSSM (152 aa). Residues 142-151 show a composition bias toward basic residues; that stretch reads SHRRDRARRR. Over residues 152–171 the composition is skewed to basic and acidic residues; the sequence is NREEAARTNGHPRGDRRRDV. Low complexity-rich tracts occupy residues 176-192 and 201-214; these read DSAS…SSFV and SRLS…TSSR. A compositionally biased stretch (basic residues) spans 215-228; the sequence is LIRKHKRRRRKQRL. Residues 251–323 form the PDZ domain; the sequence is TVTLNMERHH…NDDAVRVLRE (73 aa). Positions 400-474 constitute a DEP domain; that stretch reads PDSGLEIRDR…SEQCYYVFGD (75 aa). The disordered stretch occupies residues 518-642; that stretch reads PGPPPCFPPA…PGGPPVRELA (125 aa). 2 stretches are compositionally biased toward low complexity: residues 526 to 553 and 600 to 614; these read PAYQ…SSGS and SRGS…SYAP.

This sequence belongs to the DSH family. Expressed in thymus, heart, liver, kidney, brain, skeletal muscle, and pancreas.

It is found in the cytoplasm. Its function is as follows. May play a role in the signal transduction pathway mediated by multiple Wnt genes. The protein is Putative segment polarity protein dishevelled homolog DVL1P1 (DVL1P1) of Homo sapiens (Human).